The sequence spans 386 residues: O-phospho-L-seryl-tRNA:Cys-tRNA synthase (386 aa).

Residues 89 to 90 (AR), asparagine 196, and 219 to 221 (SGH) contribute to the pyridoxal 5'-phosphate site. The residue at position 222 (lysine 222) is an N6-(pyridoxal phosphate)lysine.

Belongs to the SepCysS family. In terms of assembly, homodimer. Interacts with SepRS. Requires pyridoxal 5'-phosphate as cofactor.

It carries out the reaction O-phospho-L-seryl-tRNA(Cys) + hydrogen sulfide + H(+) = L-cysteinyl-tRNA(Cys) + phosphate. Functionally, converts O-phospho-L-seryl-tRNA(Cys) (Sep-tRNA(Cys)) to L-cysteinyl-tRNA(Cys) (Cys-tRNA(Cys)). This chain is O-phospho-L-seryl-tRNA:Cys-tRNA synthase, found in Methanosarcina acetivorans (strain ATCC 35395 / DSM 2834 / JCM 12185 / C2A).